Here is a 238-residue protein sequence, read N- to C-terminus: 7-cyano-7-deazaguanine synthase 1 (238 aa).

Residue 14 to 24 (FSGGQDSATCL) coordinates ATP. Residues Cys-202, Cys-217, Cys-220, and Cys-223 each coordinate Zn(2+).

Belongs to the QueC family. Zn(2+) is required as a cofactor.

It catalyses the reaction 7-carboxy-7-deazaguanine + NH4(+) + ATP = 7-cyano-7-deazaguanine + ADP + phosphate + H2O + H(+). It participates in purine metabolism; 7-cyano-7-deazaguanine biosynthesis. Functionally, catalyzes the ATP-dependent conversion of 7-carboxy-7-deazaguanine (CDG) to 7-cyano-7-deazaguanine (preQ(0)). This is 7-cyano-7-deazaguanine synthase 1 from Rhodopseudomonas palustris (strain HaA2).